A 110-amino-acid chain; its full sequence is Large ribosomal subunit protein uL22 (110 aa).

This sequence belongs to the universal ribosomal protein uL22 family. Part of the 50S ribosomal subunit.

Functionally, this protein binds specifically to 23S rRNA; its binding is stimulated by other ribosomal proteins, e.g. L4, L17, and L20. It is important during the early stages of 50S assembly. It makes multiple contacts with different domains of the 23S rRNA in the assembled 50S subunit and ribosome. In terms of biological role, the globular domain of the protein is located near the polypeptide exit tunnel on the outside of the subunit, while an extended beta-hairpin is found that lines the wall of the exit tunnel in the center of the 70S ribosome. The sequence is that of Large ribosomal subunit protein uL22 from Vibrio parahaemolyticus serotype O3:K6 (strain RIMD 2210633).